A 215-amino-acid chain; its full sequence is Orotate phosphoribosyltransferase (215 aa).

Lysine 25 is a 5-phospho-alpha-D-ribose 1-diphosphate binding site. Orotate is bound at residue 33 to 34 (FF). 5-phospho-alpha-D-ribose 1-diphosphate is bound by residues 71-72 (YK), arginine 98, lysine 99, lysine 102, histidine 104, and 124-132 (DDVITAGTA). Orotate is bound by residues threonine 128 and arginine 156.

Belongs to the purine/pyrimidine phosphoribosyltransferase family. PyrE subfamily. Homodimer.

The enzyme catalyses orotidine 5'-phosphate + diphosphate = orotate + 5-phospho-alpha-D-ribose 1-diphosphate. It participates in pyrimidine metabolism; UMP biosynthesis via de novo pathway; UMP from orotate: step 1/2. Functionally, catalyzes the transfer of a ribosyl phosphate group from 5-phosphoribose 1-diphosphate to orotate, leading to the formation of orotidine monophosphate (OMP). This is Orotate phosphoribosyltransferase (ura5) from Schizosaccharomyces pombe (strain 972 / ATCC 24843) (Fission yeast).